Consider the following 576-residue polypeptide: Probable vesicular glutamate transporter eat-4 (576 aa).

Residues 1–69 are Cytoplasmic-facing; it reads MSSWNEAWDR…QTWIGKCRKR (69 aa). Residues 25 to 46 form a disordered region; sequence AAASATGAAPPQQMQEEGNENP. The span at 36–46 shows a compositional bias: polar residues; sequence QQMQEEGNENP. The chain crosses the membrane as a helical span at residues 70–90; sequence WLLAILANMGFMISFGIRCNF. The Extracellular segment spans residues 91 to 121; sequence GAAKTHMYKNYTDPYGKVHMHEFNWTIDELS. Asn100 and Asn114 each carry an N-linked (GlcNAc...) asparagine glycan. A helical membrane pass occupies residues 122–142; that stretch reads VMESSYFYGYLVTQIPAGFLA. Topologically, residues 143 to 150 are cytoplasmic; it reads AKFPPNKL. Residues 151–171 traverse the membrane as a helical segment; sequence FGFGIGVGAFLNILLPYGFKV. Topologically, residues 172-174 are extracellular; the sequence is KSD. A helical membrane pass occupies residues 175 to 195; that stretch reads YLVAFIQITQGLVQGVCYPAM. The Cytoplasmic segment spans residues 196-213; that stretch reads HGVWRYWAPPMERSKLAT. Residues 214-234 form a helical membrane-spanning segment; sequence TAFTGSYAGAVLGLPLSAFLV. Over 235-239 the chain is Extracellular; that stretch reads SYVSW. A helical transmembrane segment spans residues 240 to 260; sequence AAPFYLYGVCGVIWAILWFCV. Residues 261 to 305 are Cytoplasmic-facing; it reads TFEKPAFHPTISQEEKIFIEDAIGHVSNTHPTIRSIPWKAIVTSK. A helical membrane pass occupies residues 306-325; the sequence is PVWAIIVANFARSWTFYLLL. The Extracellular portion of the chain corresponds to 326-344; the sequence is QNQLTYMKEALGMKIADSG. Residues 345–365 traverse the membrane as a helical segment; sequence LLAAIPHLVMGCVVLMGGQLA. Residues 366–381 lie on the Cytoplasmic side of the membrane; the sequence is DYLRSNKILSTTAVRK. A helical membrane pass occupies residues 382 to 402; sequence IFNCGGFGGEAAFMLIVAYTT. Residues 403 to 406 lie on the Extracellular side of the membrane; sequence SDTT. A helical membrane pass occupies residues 407-427; sequence AIMALIAAVGMSGFAISGFNV. The Cytoplasmic segment spans residues 428–437; it reads NHLDIAPRYA. The chain crosses the membrane as a helical span at residues 438–458; the sequence is AILMGFSNGIGTLAGLTCPFV. Residues 459–471 lie on the Extracellular side of the membrane; the sequence is TEAFTAHSKHGWT. Residues 472-492 traverse the membrane as a helical segment; sequence SVFLLASLIHFTGVTFYAVYA. The Cytoplasmic segment spans residues 493–576; it reads SGELQEWAEP…VVENPHYQQW (84 aa).

This sequence belongs to the major facilitator superfamily. Sodium/anion cotransporter family. VGLUT subfamily. Expressed in neurons of the pharynx and the extrapharyngeal nervous system. Highly expressed in male PHC sensory neurons.

The protein resides in the cell membrane. It is found in the synapse. Required for glutamatergic synaptic transmission. In AWB and AWC sensory neurons, required for the detection of preferred food sources, probably via glutamatergic neurotransmission from sensory neurons. Negatively regulates the turning step of male mating behavior. The polypeptide is Probable vesicular glutamate transporter eat-4 (Caenorhabditis elegans).